The sequence spans 480 residues: MDSREFRRRGKEMVDYIADYLDGIEGRPVYPDVEPGYLRALIPTTAPQEPETYEDIIRDIEKIIMPGVTHWHSPYFFAYFPTASSYPAMLADMLCGAIGCIGFSWAASPACTELETVMMDWLGKMLELPEAFLAGRAGEGGGVIQGSASEATLVALLAARTKMIRQLQAASPELTQAALMEKLVAYTSDQAHSSVERAGLIGGVKIKAIPSDGNYSMRAAALREALERDKAAGLIPFFVVVTLGTTSCCSFDNLLEVGPICNQEGVWLHIDAAYAGSAFICPEFRYLLNGVEFADSFNFNPHKWLLVNFDCSAMWVKKRTDLTEAFNMDPVYLRHSHQDSGLITDYRHWQIPLGRRFRSLKMWFVFRMYGVKGLQAYIRKHVKLSHEFESLVRQDPRFEICTEVILGLVCFRLKGSNQLNETLLQRINSAKKIHLVPCRLRDKFVLRFAVCSRTVESAHVQLAWEHIRDLASSVLRAEKE.

An N-acetylmethionine modification is found at Met-1. A run of 2 repeats spans residues 58–115 (RDIE…TELE) and 118–178 (MMDW…TQAA). The interval 58–178 (RDIEKIIMPG…AASPELTQAA (121 aa)) is 2 X approximate tandem repeats. Substrate is bound at residue Thr-82. Positions 148 and 149 each coordinate pyridoxal 5'-phosphate. His-192 contributes to the substrate binding site. 2 residues coordinate pyridoxal 5'-phosphate: Thr-246 and Asn-300. Lys-303 is modified (N6-(pyridoxal phosphate)lysine).

The protein belongs to the group II decarboxylase family. Homodimer. It depends on pyridoxal 5'-phosphate as a cofactor.

It carries out the reaction L-dopa + H(+) = dopamine + CO2. The catalysed reaction is 5-hydroxy-L-tryptophan + H(+) = serotonin + CO2. The protein operates within catecholamine biosynthesis; dopamine biosynthesis; dopamine from L-tyrosine: step 2/2. In terms of biological role, catalyzes the decarboxylation of L-3,4-dihydroxyphenylalanine (DOPA) to dopamine and L-5-hydroxytryptophan to serotonin. The sequence is that of Aromatic-L-amino-acid decarboxylase from Rattus norvegicus (Rat).